The sequence spans 20 residues: SAEVAGAVIEGAKLTFNVLQ.

The protein belongs to the actinoporin family. Sea anemone subfamily. In terms of assembly, octamer or nonamer in membranes. Monomer in the soluble state.

The protein localises to the secreted. It is found in the nematocyst. It localises to the target cell membrane. Its function is as follows. Pore-forming toxin (PFT) that consists of a crown-shaped octamer or nonamer that forms cation-selective hydrophilic pores of about 1.5 nm (inside) and 13 nm (outside) and causes cytolysis. It causes cardiac stimulation. Also causes hemolysis (HC(50)=0.4 nM). Interestingly, the Phe-16 is crucial for hemolysis. Pore formation is a multi-step process that involves specific recognition of membrane sphingomyelin (but neither cholesterol nor phosphatidylcholine) using aromatic rich region and adjacent phosphocholine (POC) binding site, firm binding to the membrane (mainly driven by hydrophobic interactions) accompanied by the transfer of the N-terminal region to the lipid-water interface and finally pore formation after oligomerization of monomers. It is probable that a dimeric form is an assembly intermediate before the complete oligomerization. The formation of stable pores occurs only in vesicles composed of DOPC/SM (there is no oligomerization when the PFT is treated with vesicles of DOPC or SM alone). The transmembrane pore displays 8 lateral perforations, one at each subunit-subunit interface, partially occupied by the acyl-chain region of a bridging lipid. Each pore contains 24 lipid molecules, firmly bound to each subunit, that is, 3 lipids (L1, L2, L3, L4 and/or L5) are associated to each subunit. Lipid L1 bridges 2 subunits, whereas lipids L2 and L3 bind to sites at single subunit. This is DELTA-actitoxin-Afr1b from Actinia fragacea (Strawberry anemone).